Here is a 504-residue protein sequence, read N- to C-terminus: Ent-kaurene oxidase-like 3 (504 aa).

The helical transmembrane segment at Ser-3 to Ile-23 threads the bilayer. Cys-448 is a binding site for heme.

This sequence belongs to the cytochrome P450 family. It depends on heme as a cofactor. As to expression, expressed in leaf blades.

The protein resides in the membrane. Its function is as follows. May hydroxylate diterpenes. The protein is Ent-kaurene oxidase-like 3 of Oryza sativa subsp. japonica (Rice).